The primary structure comprises 293 residues: Bifunctional protein FolD (293 aa).

Residues 166–168 (GAS) and I232 contribute to the NADP(+) site.

The protein belongs to the tetrahydrofolate dehydrogenase/cyclohydrolase family. As to quaternary structure, homodimer.

It catalyses the reaction (6R)-5,10-methylene-5,6,7,8-tetrahydrofolate + NADP(+) = (6R)-5,10-methenyltetrahydrofolate + NADPH. The enzyme catalyses (6R)-5,10-methenyltetrahydrofolate + H2O = (6R)-10-formyltetrahydrofolate + H(+). It participates in one-carbon metabolism; tetrahydrofolate interconversion. Its function is as follows. Catalyzes the oxidation of 5,10-methylenetetrahydrofolate to 5,10-methenyltetrahydrofolate and then the hydrolysis of 5,10-methenyltetrahydrofolate to 10-formyltetrahydrofolate. The sequence is that of Bifunctional protein FolD from Yersinia enterocolitica serotype O:8 / biotype 1B (strain NCTC 13174 / 8081).